Here is a 312-residue protein sequence, read N- to C-terminus: Calcium-independent mitochondrial carrier protein SCaMC-3L (312 aa).

Solcar repeat units lie at residues 27-113 (GTLW…SRNF), 121-206 (PSFQ…LRCL), and 217-304 (PSGL…MKKT). The next 6 helical transmembrane spans lie at 33–50 (LLSG…TAPL), 88–107 (GNGI…FSVF), 131–144 (SLAV…INPM), 182–200 (YLPN…LAVY), 219–243 (GLVS…LTLV), and 279–298 (GMTP…YLVY).

The protein belongs to the mitochondrial carrier (TC 2.A.29) family. In terms of tissue distribution, mainly expressed in testis and at lesser levels in brain.

The protein localises to the mitochondrion inner membrane. The catalysed reaction is Mg(2+)(out) + phosphate(in) + ATP(out) = Mg(2+)(in) + phosphate(out) + ATP(in). The enzyme catalyses ADP(out) + phosphate(in) + H(+)(out) = ADP(in) + phosphate(out) + H(+)(in). Its function is as follows. Calcium-independent ATP-Mg/Pi exchanger that catalyzes the electroneutral exchange of Mg-ATP or free ADP against an hydrogenphosphate and participates in the net transport of adenine nucleotides across the mitochondria inner membrane. This chain is Calcium-independent mitochondrial carrier protein SCaMC-3L, found in Rattus norvegicus (Rat).